A 397-amino-acid chain; its full sequence is Purine nucleoside transport protein NupG (397 aa).

A run of 11 helical transmembrane segments spans residues 1 to 21 (MYFL…FLCS), 32 to 52 (IITL…TKVG), 62 to 82 (FFTW…PSVM), 97 to 117 (IIFI…PWLI), 133 to 153 (LESF…LAVI), 165 to 185 (LLTF…GSYL), 187 to 207 (MVPA…ALII), 242 to 262 (MLVG…YVAL), 282 to 302 (IFAY…HDAM), 335 to 355 (VAVA…GMIY), and 377 to 397 (LLVS…LFVW).

Belongs to the concentrative nucleoside transporter (CNT) (TC 2.A.41) family.

It localises to the cell membrane. In terms of biological role, involved in the uptake of the purine ribonucleosides inosine and guanosine. This is Purine nucleoside transport protein NupG (nupG) from Bacillus subtilis (strain 168).